We begin with the raw amino-acid sequence, 490 residues long: Doublesex- and mab-3-related transcription factor A1 (490 aa).

Positions 1–13 are enriched in basic and acidic residues; the sequence is MERLPHGRRDRSG. The tract at residues 1–31 is disordered; the sequence is MERLPHGRRDRSGGCRPHLAPGRAAAPASAA. Positions 20 to 31 are enriched in low complexity; the sequence is APGRAAAPASAA. The segment at residues 86–133 is a DNA-binding region (DM); the sequence is CARCRNHGVVSALKGHKRFCRWRDCACAKCTLIAERQRVMAAQVALRR. Disordered regions lie at residues 152–171 and 207–289; these read GSSG…ESPQ and DRKQ…DLES. Over residues 207 to 216 the composition is skewed to basic and acidic residues; it reads DRKQEPKQRN. Composition is skewed to polar residues over residues 217-242 and 269-289; these read CESC…SKGN and PTDQ…DLES. The DMA domain occupies 314–349; that stretch reads RDPLGILTRIFPGYKHSRLEGILQFCKGDVVQAIEQ.

This sequence belongs to the DMRT family. In terms of tissue distribution, widely expressed, with highest levels in ovary, testis, epididymis, preputial gland, vomeronasal organ, liver, salivary glands and heart. Also expressed throughout the brain with highest levels in the olfactory bulbs and medulla. Detected at similar levels in gonads of both sexes.

The protein localises to the nucleus. The protein is Doublesex- and mab-3-related transcription factor A1 (Dmrta1) of Mus musculus (Mouse).